Reading from the N-terminus, the 223-residue chain is MTTQDELKRIAAEKAVEFVPENEYIGIGTGSTINFFIEALGKSGKKIKGAVSTSKKSGELLARYDIPVVSLNEVSGLAVYIDGADEVNHALQMIKGGGGAHLNEKIVASASEKFVCIADESKYVSRLGKFPLPVEAVESARSLVSRKLLAMGGQPELRIGYTTFYGNQIVDVHGLNIDQPLTMEDEINKITGVLENGIFARDAADVLILGTEEGAKVIYPCQG.

Substrate is bound by residues 29 to 32, 82 to 85, and 95 to 98; these read TGST, DGAD, and KGGG. E104 (proton acceptor) is an active-site residue. K122 lines the substrate pocket.

Belongs to the ribose 5-phosphate isomerase family. As to quaternary structure, homodimer.

It catalyses the reaction aldehydo-D-ribose 5-phosphate = D-ribulose 5-phosphate. Its pathway is carbohydrate degradation; pentose phosphate pathway; D-ribose 5-phosphate from D-ribulose 5-phosphate (non-oxidative stage): step 1/1. Functionally, catalyzes the reversible conversion of ribose-5-phosphate to ribulose 5-phosphate. The chain is Ribose-5-phosphate isomerase A from Neisseria gonorrhoeae (strain ATCC 700825 / FA 1090).